We begin with the raw amino-acid sequence, 490 residues long: Aspartyl/glutamyl-tRNA(Asn/Gln) amidotransferase subunit B (490 aa).

It belongs to the GatB/GatE family. GatB subfamily. As to quaternary structure, heterotrimer of A, B and C subunits.

The catalysed reaction is L-glutamyl-tRNA(Gln) + L-glutamine + ATP + H2O = L-glutaminyl-tRNA(Gln) + L-glutamate + ADP + phosphate + H(+). The enzyme catalyses L-aspartyl-tRNA(Asn) + L-glutamine + ATP + H2O = L-asparaginyl-tRNA(Asn) + L-glutamate + ADP + phosphate + 2 H(+). Allows the formation of correctly charged Asn-tRNA(Asn) or Gln-tRNA(Gln) through the transamidation of misacylated Asp-tRNA(Asn) or Glu-tRNA(Gln) in organisms which lack either or both of asparaginyl-tRNA or glutaminyl-tRNA synthetases. The reaction takes place in the presence of glutamine and ATP through an activated phospho-Asp-tRNA(Asn) or phospho-Glu-tRNA(Gln). The polypeptide is Aspartyl/glutamyl-tRNA(Asn/Gln) amidotransferase subunit B (Methylorubrum populi (strain ATCC BAA-705 / NCIMB 13946 / BJ001) (Methylobacterium populi)).